The chain runs to 229 residues: 4-hydroxy-tetrahydrodipicolinate reductase (229 aa).

Residues 10–15 (GSAGRM), 78–80 (GTT), and 102–105 (SSNM) each bind NAD(+). His-133 acts as the Proton donor/acceptor in catalysis. His-134 is a binding site for (S)-2,3,4,5-tetrahydrodipicolinate. Lys-137 serves as the catalytic Proton donor. 143-144 (GT) provides a ligand contact to (S)-2,3,4,5-tetrahydrodipicolinate.

This sequence belongs to the DapB family.

It localises to the cytoplasm. The enzyme catalyses (S)-2,3,4,5-tetrahydrodipicolinate + NAD(+) + H2O = (2S,4S)-4-hydroxy-2,3,4,5-tetrahydrodipicolinate + NADH + H(+). It carries out the reaction (S)-2,3,4,5-tetrahydrodipicolinate + NADP(+) + H2O = (2S,4S)-4-hydroxy-2,3,4,5-tetrahydrodipicolinate + NADPH + H(+). It functions in the pathway amino-acid biosynthesis; L-lysine biosynthesis via DAP pathway; (S)-tetrahydrodipicolinate from L-aspartate: step 4/4. Its function is as follows. Catalyzes the conversion of 4-hydroxy-tetrahydrodipicolinate (HTPA) to tetrahydrodipicolinate. The polypeptide is 4-hydroxy-tetrahydrodipicolinate reductase (Bdellovibrio bacteriovorus (strain ATCC 15356 / DSM 50701 / NCIMB 9529 / HD100)).